Here is a 320-residue protein sequence, read N- to C-terminus: Methionyl-tRNA formyltransferase (320 aa).

114-117 (SLLP) is a binding site for (6S)-5,6,7,8-tetrahydrofolate.

Belongs to the Fmt family.

It carries out the reaction L-methionyl-tRNA(fMet) + (6R)-10-formyltetrahydrofolate = N-formyl-L-methionyl-tRNA(fMet) + (6S)-5,6,7,8-tetrahydrofolate + H(+). In terms of biological role, attaches a formyl group to the free amino group of methionyl-tRNA(fMet). The formyl group appears to play a dual role in the initiator identity of N-formylmethionyl-tRNA by promoting its recognition by IF2 and preventing the misappropriation of this tRNA by the elongation apparatus. This Acinetobacter baumannii (strain SDF) protein is Methionyl-tRNA formyltransferase.